Here is a 119-residue protein sequence, read N- to C-terminus: Large ribosomal subunit protein uL24 (119 aa).

It belongs to the universal ribosomal protein uL24 family. Part of the 50S ribosomal subunit.

In terms of biological role, one of two assembly initiator proteins, it binds directly to the 5'-end of the 23S rRNA, where it nucleates assembly of the 50S subunit. Functionally, one of the proteins that surrounds the polypeptide exit tunnel on the outside of the subunit. The polypeptide is Large ribosomal subunit protein uL24 (Leptospira interrogans serogroup Icterohaemorrhagiae serovar copenhageni (strain Fiocruz L1-130)).